The primary structure comprises 407 residues: Phosphonoacetate hydrolase (407 aa).

Residues D25, T64, D202, H206, D241, H242, and H368 each coordinate Zn(2+). 2 residues coordinate substrate: T64 and D202. Positions 242 and 368 each coordinate substrate.

The protein belongs to the alkaline phosphatase family. PhnA subfamily. As to quaternary structure, homodimer. It depends on Zn(2+) as a cofactor.

It carries out the reaction phosphonoacetate + H2O = acetate + phosphate + H(+). Functionally, specifically hydrolyzes phosphonoacetate. Does not have activity on other organophosphonates or acetates. This is Phosphonoacetate hydrolase from Pseudomonas cedrina.